The chain runs to 108 residues: Nucleoid-associated protein BQ02190 (108 aa).

Belongs to the YbaB/EbfC family. In terms of assembly, homodimer.

It is found in the cytoplasm. Its subcellular location is the nucleoid. In terms of biological role, binds to DNA and alters its conformation. May be involved in regulation of gene expression, nucleoid organization and DNA protection. The chain is Nucleoid-associated protein BQ02190 from Bartonella quintana (strain Toulouse) (Rochalimaea quintana).